The primary structure comprises 518 residues: Glutamate--cysteine ligase (518 aa).

The protein belongs to the glutamate--cysteine ligase type 1 family. Type 1 subfamily.

The enzyme catalyses L-cysteine + L-glutamate + ATP = gamma-L-glutamyl-L-cysteine + ADP + phosphate + H(+). It functions in the pathway sulfur metabolism; glutathione biosynthesis; glutathione from L-cysteine and L-glutamate: step 1/2. The sequence is that of Glutamate--cysteine ligase from Shigella dysenteriae serotype 1 (strain Sd197).